Here is a 312-residue protein sequence, read N- to C-terminus: Ribosomal RNA small subunit methyltransferase H (312 aa).

Residues 1–24 are disordered; it reads MNIMTANQGAVSPSQTESEASPPT. S-adenosyl-L-methionine-binding positions include 55–57, aspartate 72, tyrosine 96, aspartate 117, and glutamine 124; that span reads AGH. Positions 288–312 are disordered; the sequence is EQVDNPRARSAKLRVGERAAAPEGS.

This sequence belongs to the methyltransferase superfamily. RsmH family.

Its subcellular location is the cytoplasm. The enzyme catalyses cytidine(1402) in 16S rRNA + S-adenosyl-L-methionine = N(4)-methylcytidine(1402) in 16S rRNA + S-adenosyl-L-homocysteine + H(+). Its function is as follows. Specifically methylates the N4 position of cytidine in position 1402 (C1402) of 16S rRNA. The protein is Ribosomal RNA small subunit methyltransferase H of Deinococcus radiodurans (strain ATCC 13939 / DSM 20539 / JCM 16871 / CCUG 27074 / LMG 4051 / NBRC 15346 / NCIMB 9279 / VKM B-1422 / R1).